We begin with the raw amino-acid sequence, 141 residues long: Large ribosomal subunit protein uL11 (141 aa).

This sequence belongs to the universal ribosomal protein uL11 family. As to quaternary structure, part of the ribosomal stalk of the 50S ribosomal subunit. Interacts with L10 and the large rRNA to form the base of the stalk. L10 forms an elongated spine to which L12 dimers bind in a sequential fashion forming a multimeric L10(L12)X complex. Post-translationally, one or more lysine residues are methylated.

In terms of biological role, forms part of the ribosomal stalk which helps the ribosome interact with GTP-bound translation factors. In Prochlorococcus marinus subsp. pastoris (strain CCMP1986 / NIES-2087 / MED4), this protein is Large ribosomal subunit protein uL11.